The chain runs to 215 residues: Small ribosomal subunit protein uS7 (215 aa).

The protein belongs to the universal ribosomal protein uS7 family. Part of the 30S ribosomal subunit.

Functionally, one of the primary rRNA binding proteins, it binds directly to 16S rRNA where it nucleates assembly of the head domain of the 30S subunit. Is located at the subunit interface close to the decoding center. This Pyrococcus abyssi (strain GE5 / Orsay) protein is Small ribosomal subunit protein uS7.